The sequence spans 570 residues: Set1/Ash2 histone methyltransferase complex subunit ash-2 (570 aa).

A PHD-type zinc finger spans residues 19–76 (TTVCYCDGKRELGSVEVVCSTCLKWFHGRCLKEFHELNSNGVPFMICYTFTCKQCRPT). A disordered region spans residues 201–242 (NREPRHIELPPIEGPKTRGASKRRHAEAPVTGKKQKLAADYS). The region spanning 270 to 468 (PNVPEDPAWN…TLVEMPGSYI (199 aa)) is the B30.2/SPRY domain.

In terms of assembly, component of the SET2 complex (also known as the SET1/COMPASS complex), which contains at least set-2, swd-2.1, cfp-1, rbbp-5, wdr-5.1, dpy-30 and ash-2. Within the complex, interacts with cfp-1 and wdr-5.1. As to expression, expressed in somatic and germline tissues (at protein level).

Its subcellular location is the nucleus. Its function is as follows. Component of the set-2/ash-2 histone methyltransferase (HMT) complex. Required for the di- and trimethylation at 'Lys-4' of histone H3, a mark associated with epigenetic transcriptional activation. Implicated in the epigenetic inheritance of lifespan over several generations. Functions as a transcriptional regulator. Acts in the germline to limit the longevity of the soma, probably by regulating a lipid metabolism pathway that signals from the germline to the intestine, thereby preventing accumulation of mono-unsaturated fatty acids. This chain is Set1/Ash2 histone methyltransferase complex subunit ash-2, found in Caenorhabditis elegans.